The sequence spans 160 residues: MMERFEKIEMKIPAKAEYVAIIRLTMAGVANRMGFAYDDIEDMKIAISEACTNIVQHAYKEDVGEIAIVFGLYENRLEIMVADNGVSFDFNNLRSKVGPYDISKPVEHLPENGLGLYLINTLMDDIQIMHDEGMTVLMTKYIQREQVENDGNPISTYESY.

This sequence belongs to the anti-sigma-factor family.

The catalysed reaction is L-seryl-[protein] + ATP = O-phospho-L-seryl-[protein] + ADP + H(+). It carries out the reaction L-threonyl-[protein] + ATP = O-phospho-L-threonyl-[protein] + ADP + H(+). Negative regulator of sigma-B activity. Phosphorylates and inactivates its specific antagonist protein, RsbV. Upon phosphorylation of RsbV, RsbW is released and binds to sigma-B, thereby blocking its ability to form an RNA polymerase holoenzyme (E-sigma-B). This chain is Serine-protein kinase RsbW, found in Bacillus anthracis (strain A0248).